The primary structure comprises 386 residues: NADPH-dependent alkenal/one oxidoreductase, chloroplastic (386 aa).

The protein belongs to the zinc-containing alcohol dehydrogenase family. Quinone oxidoreductase subfamily.

Its subcellular location is the plastid. It is found in the chloroplast. Its function is as follows. Reduces the double bond in short-chain unsaturated carbonyls. Acts preferentially on alpha,beta-unsaturated ketones rather on alpha,beta-unsaturated aldehydes. Has no activity with (E)-2-hexenal and (E)-2-pentenal. Contributes to detoxify stromal reactive carbonyls produced under oxidative stress. The chain is NADPH-dependent alkenal/one oxidoreductase, chloroplastic from Arabidopsis thaliana (Mouse-ear cress).